The primary structure comprises 121 residues: MSLTNEQIIEAIGQKTVLEVVELIKAMEETFGVTAAVAAAGPAAAAAVVEEQTEFNVVLVEAGDKKVNVIKAVRELTGLGLKEAKEKVDGAPQVVAEGVSKEAAEDAKKKLEEAGAKVELK.

Belongs to the bacterial ribosomal protein bL12 family. Homodimer. Part of the ribosomal stalk of the 50S ribosomal subunit. Forms a multimeric L10(L12)X complex, where L10 forms an elongated spine to which 2 to 4 L12 dimers bind in a sequential fashion. Binds GTP-bound translation factors.

Forms part of the ribosomal stalk which helps the ribosome interact with GTP-bound translation factors. Is thus essential for accurate translation. The sequence is that of Large ribosomal subunit protein bL12 from Pseudomonas putida (strain GB-1).